The following is a 317-amino-acid chain: tRNA dimethylallyltransferase (317 aa).

19–26 (GPTASGKS) is a binding site for ATP. Residue 21 to 26 (TASGKS) coordinates substrate. The interval 44–47 (DSMQ) is interaction with substrate tRNA.

This sequence belongs to the IPP transferase family. Monomer. Requires Mg(2+) as cofactor.

The catalysed reaction is adenosine(37) in tRNA + dimethylallyl diphosphate = N(6)-dimethylallyladenosine(37) in tRNA + diphosphate. Functionally, catalyzes the transfer of a dimethylallyl group onto the adenine at position 37 in tRNAs that read codons beginning with uridine, leading to the formation of N6-(dimethylallyl)adenosine (i(6)A). This Methylorubrum extorquens (strain CM4 / NCIMB 13688) (Methylobacterium extorquens) protein is tRNA dimethylallyltransferase.